The following is a 392-amino-acid chain: Glutamyl-tRNA reductase (392 aa).

Substrate is bound by residues 38–41, serine 86, 91–93, and glutamine 97; these read TCNR and EDQ. The active-site Nucleophile is cysteine 39. Residue 165–170 participates in NADP(+) binding; the sequence is GAGEMA.

Belongs to the glutamyl-tRNA reductase family. Homodimer.

The enzyme catalyses (S)-4-amino-5-oxopentanoate + tRNA(Glu) + NADP(+) = L-glutamyl-tRNA(Glu) + NADPH + H(+). It participates in porphyrin-containing compound metabolism; protoporphyrin-IX biosynthesis; 5-aminolevulinate from L-glutamyl-tRNA(Glu): step 1/2. In terms of biological role, catalyzes the NADPH-dependent reduction of glutamyl-tRNA(Glu) to glutamate 1-semialdehyde (GSA). The sequence is that of Glutamyl-tRNA reductase from Methanocaldococcus jannaschii (strain ATCC 43067 / DSM 2661 / JAL-1 / JCM 10045 / NBRC 100440) (Methanococcus jannaschii).